Reading from the N-terminus, the 264-residue chain is Thymidylate synthase (264 aa).

Arginine 21 provides a ligand contact to dUMP. Histidine 51 contributes to the (6R)-5,10-methylene-5,6,7,8-tetrahydrofolate binding site. 126 to 127 (RR) is a dUMP binding site. Cysteine 146 acts as the Nucleophile in catalysis. Residues 166-169 (RSCD), asparagine 177, and 207-209 (HLY) contribute to the dUMP site. A (6R)-5,10-methylene-5,6,7,8-tetrahydrofolate-binding site is contributed by aspartate 169. Alanine 263 serves as a coordination point for (6R)-5,10-methylene-5,6,7,8-tetrahydrofolate.

Belongs to the thymidylate synthase family. Bacterial-type ThyA subfamily. Homodimer.

It localises to the cytoplasm. The enzyme catalyses dUMP + (6R)-5,10-methylene-5,6,7,8-tetrahydrofolate = 7,8-dihydrofolate + dTMP. It functions in the pathway pyrimidine metabolism; dTTP biosynthesis. Catalyzes the reductive methylation of 2'-deoxyuridine-5'-monophosphate (dUMP) to 2'-deoxythymidine-5'-monophosphate (dTMP) while utilizing 5,10-methylenetetrahydrofolate (mTHF) as the methyl donor and reductant in the reaction, yielding dihydrofolate (DHF) as a by-product. This enzymatic reaction provides an intracellular de novo source of dTMP, an essential precursor for DNA biosynthesis. The sequence is that of Thymidylate synthase from Shewanella denitrificans (strain OS217 / ATCC BAA-1090 / DSM 15013).